The primary structure comprises 479 residues: UPF0164 protein TP_0865 (479 aa).

Positions 1–49 (MVRMRRRRACSSGGACGCAAVRGARSFLSVRVLGMRIGMSALCLAPLFA) are cleaved as a signal peptide.

The protein belongs to the UPF0164 family.

The polypeptide is UPF0164 protein TP_0865 (Treponema pallidum (strain Nichols)).